Consider the following 355-residue polypeptide: 45 kDa calcium-binding protein (355 aa).

The N-terminal stretch at 1–29 (MASRQGPLCGLAPCCLWLLGVILLMNASA) is a signal peptide. N-linked (GlcNAc...) asparagine glycosylation is present at Asn-26. 2 consecutive EF-hand domains span residues 91-126 (KSRRKLMVIFSKVDLNTDRRISAKEMQKWIMQKTAE) and 130-165 (EAVAESRAHFRAVDPDGDGHVSWDEYKVKFLATKGH). Position 92 is a phosphoserine (Ser-92). The Ca(2+) site is built by Asp-104, Asn-106, Asp-108, Arg-110, Glu-115, Asp-143, Asp-145, Asp-147, His-149, and Glu-154. Residues Thr-186 and Thr-210 each carry the phosphothreonine modification. 3 consecutive EF-hand domains span residues 226 to 261 (MLQFMVKEIIRDLDQDGDKKLSLSEFISLPVGTVEN), 271 to 306 (WVRDRKREFEELIDANHDGIVTMAELEDYMDPMNEF), and 307 to 342 (SALNEAKQMIAIADENQNHYLEPEEVLKYSEFFTGS). Ca(2+)-binding residues include Asp-239, Asp-241, Asp-243, Lys-245, and Glu-250. Thr-258 bears the Phosphothreonine mark. 3 residues coordinate Ca(2+): Asp-284, Asn-286, and Asp-288. Position 292 is a phosphothreonine (Thr-292). Positions 295, 320, 322, 324, 326, and 331 each coordinate Ca(2+). The segment at 302-355 (PMNEFSALNEAKQMIAIADENQNHYLEPEEVLKYSEFFTGSKLVDYARSVHEEF) is necessary for intracellular retention in Golgi apparatus lumen.

The protein belongs to the CREC family.

The protein localises to the golgi apparatus lumen. Functionally, may regulate calcium-dependent activities in the endoplasmic reticulum lumen or post-ER compartment. The chain is 45 kDa calcium-binding protein (SDF4) from Capra hircus (Goat).